Consider the following 427-residue polypeptide: Glutamate-1-semialdehyde 2,1-aminomutase (427 aa).

Residue Lys-265 is modified to N6-(pyridoxal phosphate)lysine.

Belongs to the class-III pyridoxal-phosphate-dependent aminotransferase family. HemL subfamily. As to quaternary structure, homodimer. Pyridoxal 5'-phosphate serves as cofactor.

The protein resides in the cytoplasm. It carries out the reaction (S)-4-amino-5-oxopentanoate = 5-aminolevulinate. It participates in porphyrin-containing compound metabolism; protoporphyrin-IX biosynthesis; 5-aminolevulinate from L-glutamyl-tRNA(Glu): step 2/2. This chain is Glutamate-1-semialdehyde 2,1-aminomutase, found in Bordetella petrii (strain ATCC BAA-461 / DSM 12804 / CCUG 43448).